A 415-amino-acid chain; its full sequence is MPTTIEREFEELDTQRRWQPLYLEIRNESHDYPHRVAKFPENRNRNRYRDVSPYDHSRVKLQNAENDYINASLVDIEEAQRSYILTQGPLPNTCCHFWLMVWQQKTKAVVMLNRIVEKESVKCAQYWPTDDQEMLFKETGFSVKLLSEDVKSYYTVHLLQLENINSGETRTISHFHYTTWPDFGVPESPASFLNFLFKVRESGSLNPDHGPAVIHCSAGIGRSGTFSLVDTCLVLMEKGDDINIKQVLLNMRKYRMGLIQTPDQLRFSYMAIIEGAKCIKGDSSIQKRWKELSKEDLSPAFDHSPNKIMTEKYNGNRIGLEEEKLTGDRCTGLSSKMQDTMEENSESALRKRIREDRKATTAQKVQQMKQRLNENERKRKRWLYWQPILTKMGFMSVILVGAFVGWTLFFQQNAL.

Positions 5 to 275 constitute a Tyrosine-protein phosphatase domain; that stretch reads IEREFEELDT…RFSYMAIIEG (271 aa). Tyrosine 22 carries the phosphotyrosine modification. Residue serine 52 is modified to Phosphoserine. Tyrosine 68 is modified (phosphotyrosine). Substrate contacts are provided by residues aspartate 182, 216-222, and glutamine 260; that span reads CSAGIGR. The active-site Phosphocysteine intermediate is the cysteine 216. At cysteine 216 the chain carries S-nitrosocysteine. A phosphoserine mark is found at serine 293, serine 298, and serine 304. Positions 346 to 415 are endoplasmic reticulum location; it reads ESALRKRIRE…WTLFFQQNAL (70 aa). A mediates interaction with STX17 region spans residues 376 to 415; the sequence is ERKRKRWLYWQPILTKMGFMSVILVGAFVGWTLFFQQNAL.

It belongs to the protein-tyrosine phosphatase family. Non-receptor class 1 subfamily. Interacts with RMDN3. Isoform 1 interacts with TMED9. Isoform 1 interacts with STX17; dephosphorylates STX17. Interacts with ITGA1 (via cytoplasmic domain); activates the phosphatase activity towards EGFR. Interacts with TRAF2; probably involved in tumor necrosis factor-mediated signaling. Interacts with MET. Interacts with FAM220A and STAT3; interaction with FAM220A promotes interaction of PTPN2 with transcriptional activator STAT3, leading to dephosphorylation of STAT3 by PTPN2 and negative regulation of STAT3 transcriptional activator activity. Post-translationally, specifically phosphorylated in a cell cycle-dependent manner by cyclin-dependent kinases CDK1 and CDK2. Probably activated through phosphorylation by PKR. In terms of tissue distribution, ubiquitously expressed. Isoform 2 is probably the major isoform. Isoform 1 is expressed in T-cells and in placenta.

Its subcellular location is the endoplasmic reticulum. It is found in the endoplasmic reticulum-Golgi intermediate compartment. It localises to the nucleus. The protein localises to the cytoplasm. The protein resides in the cell membrane. The catalysed reaction is O-phospho-L-tyrosyl-[protein] + H2O = L-tyrosyl-[protein] + phosphate. In terms of biological role, non-receptor type tyrosine-specific phosphatase that dephosphorylates receptor protein tyrosine kinases including INSR, EGFR, CSF1R, PDGFR. Also dephosphorylates non-receptor protein tyrosine kinases like JAK1, JAK2, JAK3, Src family kinases, STAT1, STAT3 and STAT6 either in the nucleus or the cytoplasm. Negatively regulates numerous signaling pathways and biological processes like hematopoiesis, inflammatory response, cell proliferation and differentiation, and glucose homeostasis. Plays a multifaceted and important role in the development of the immune system. Functions in T-cell receptor signaling through dephosphorylation of FYN and LCK to control T-cells differentiation and activation. Dephosphorylates CSF1R, negatively regulating its downstream signaling and macrophage differentiation. Negatively regulates cytokine (IL2/interleukin-2 and interferon)-mediated signaling through dephosphorylation of the cytoplasmic kinases JAK1, JAK3 and their substrate STAT1, that propagate signaling downstream of the cytokine receptors. Also regulates the IL6/interleukin-6 and IL4/interleukin-4 cytokine signaling through dephosphorylation of STAT3 and STAT6 respectively. In addition to the immune system, it is involved in anchorage-dependent, negative regulation of EGF-stimulated cell growth. Activated by the integrin ITGA1/ITGB1, it dephosphorylates EGFR and negatively regulates EGF signaling. Dephosphorylates PDGFRB and negatively regulates platelet-derived growth factor receptor-beta signaling pathway and therefore cell proliferation. Negatively regulates tumor necrosis factor-mediated signaling downstream via MAPK through SRC dephosphorylation. May also regulate the hepatocyte growth factor receptor signaling pathway through dephosphorylation of the hepatocyte growth factor receptor MET. Also plays an important role in glucose homeostasis. For instance, negatively regulates the insulin receptor signaling pathway through the dephosphorylation of INSR and control gluconeogenesis and liver glucose production through negative regulation of the IL6 signaling pathways. May also bind DNA. This Homo sapiens (Human) protein is Tyrosine-protein phosphatase non-receptor type 2 (PTPN2).